We begin with the raw amino-acid sequence, 149 residues long: Histone H2A (149 aa).

Positions 1-23 are enriched in basic residues; it reads METAGKAKKGFGGRKGGPRKKSV. Disordered regions lie at residues 1–25 and 127–149; these read METAGKAKKGFGGRKGGPRKKSVTR and KTAEKAAKEPKSPSKAGKSPKKA. Positions 127 to 138 are enriched in basic and acidic residues; it reads KTAEKAAKEPKS. 2 short sequence motifs (SPKK motif) span residues 138–141 and 145–148; these read SPSK and SPKK.

Belongs to the histone H2A family. As to quaternary structure, the nucleosome is a histone octamer containing two molecules each of H2A, H2B, H3 and H4 assembled in one H3-H4 heterotetramer and two H2A-H2B heterodimers. The octamer wraps approximately 147 bp of DNA.

The protein resides in the nucleus. The protein localises to the chromosome. In terms of biological role, core component of nucleosome. Nucleosomes wrap and compact DNA into chromatin, limiting DNA accessibility to the cellular machineries which require DNA as a template. Histones thereby play a central role in transcription regulation, DNA repair, DNA replication and chromosomal stability. DNA accessibility is regulated via a complex set of post-translational modifications of histones, also called histone code, and nucleosome remodeling. This Petroselinum crispum (Parsley) protein is Histone H2A.